The chain runs to 387 residues: Mannitol-1-phosphate 5-dehydrogenase (387 aa).

Position 3 to 14 (3 to 14 (AVHFGAGNIGRG)) interacts with NAD(+).

The protein belongs to the mannitol dehydrogenase family.

It catalyses the reaction D-mannitol 1-phosphate + NAD(+) = beta-D-fructose 6-phosphate + NADH + H(+). The sequence is that of Mannitol-1-phosphate 5-dehydrogenase from Pseudarthrobacter chlorophenolicus (strain ATCC 700700 / DSM 12829 / CIP 107037 / JCM 12360 / KCTC 9906 / NCIMB 13794 / A6) (Arthrobacter chlorophenolicus).